The following is a 239-amino-acid chain: tRNA (guanine-N(7)-)-methyltransferase (239 aa).

S-adenosyl-L-methionine contacts are provided by Glu69, Glu94, Asp121, and Asp144. The active site involves Asp144. Substrate-binding positions include Lys148, Asp180, and 217 to 220; that span reads TKFE.

The protein belongs to the class I-like SAM-binding methyltransferase superfamily. TrmB family. Monomer.

The enzyme catalyses guanosine(46) in tRNA + S-adenosyl-L-methionine = N(7)-methylguanosine(46) in tRNA + S-adenosyl-L-homocysteine. It functions in the pathway tRNA modification; N(7)-methylguanine-tRNA biosynthesis. Functionally, catalyzes the formation of N(7)-methylguanine at position 46 (m7G46) in tRNA. This Buchnera aphidicola subsp. Acyrthosiphon pisum (strain Tuc7) protein is tRNA (guanine-N(7)-)-methyltransferase.